We begin with the raw amino-acid sequence, 224 residues long: Putative adhesin A1E_05320 (224 aa).

Positions 1–22 are cleaved as a signal peptide; it reads MKKLLLIAATSATMLSSTLSFA.

In Rickettsia canadensis (strain McKiel), this protein is Putative adhesin A1E_05320.